Consider the following 203-residue polypeptide: Putative phosphoserine phosphatase 2 (203 aa).

Catalysis depends on H9, which acts as the Tele-phosphohistidine intermediate. Residue H149 is part of the active site.

This sequence belongs to the histidine phosphatase superfamily. Metal-independent phosphoserine phosphatase family. In terms of assembly, heterodimer with PspA. The PspB subunit appears to have no or considerably lower PSP activity compared with that of PspA.

The enzyme catalyses O-phospho-L-serine + H2O = L-serine + phosphate. It carries out the reaction O-phospho-D-serine + H2O = D-serine + phosphate. Its pathway is amino-acid biosynthesis; L-serine biosynthesis; L-serine from 3-phospho-D-glycerate: step 3/3. Activity is not inhibited by EDTA in vitro, nor enhanced by the addition of Mg(2+). Part of a complex that catalyzes the dephosphorylation of L-phosphoserine to serine and inorganic phosphate. Is poorly or not active toward D-phosphoserine, DL-phosphothreonine, 3-phosphoglycerate, para-nitrophenylphosphate, and fructose-6-phosphate. Does not display phosphoglycerate mutase activity. This is Putative phosphoserine phosphatase 2 (pspB) from Hydrogenobacter thermophilus (strain DSM 6534 / IAM 12695 / TK-6).